The following is a 533-amino-acid chain: Dipeptidase (533 aa).

The active site involves Cys3.

It belongs to the peptidase C69 family.

It catalyses the reaction an L-aminoacyl-L-amino acid + H2O = 2 an L-alpha-amino acid. Hydrolyzes a wide range of dipeptides. Highest activity against Ala-Gln. This chain is Dipeptidase, found in Bifidobacterium longum (strain NCC 2705).